A 360-amino-acid chain; its full sequence is Phospho-N-acetylmuramoyl-pentapeptide-transferase (360 aa).

10 helical membrane passes run 2 to 22 (IAIL…TPLF), 52 to 72 (MGGV…NISA), 80 to 100 (GLLL…DDFI), 114 to 134 (WKII…LQFP), 156 to 176 (LAFA…NFLI), 189 to 209 (LDGL…VVTM), 235 to 255 (LAIV…WNAS), 259 to 279 (IFMG…LSIL), 284 to 304 (FLAV…VIQI), and 338 to 358 (FWLI…AEWV).

It belongs to the glycosyltransferase 4 family. MraY subfamily. Mg(2+) is required as a cofactor.

It localises to the cell membrane. It catalyses the reaction UDP-N-acetyl-alpha-D-muramoyl-L-alanyl-gamma-D-glutamyl-meso-2,6-diaminopimeloyl-D-alanyl-D-alanine + di-trans,octa-cis-undecaprenyl phosphate = di-trans,octa-cis-undecaprenyl diphospho-N-acetyl-alpha-D-muramoyl-L-alanyl-D-glutamyl-meso-2,6-diaminopimeloyl-D-alanyl-D-alanine + UMP. It participates in cell wall biogenesis; peptidoglycan biosynthesis. Catalyzes the initial step of the lipid cycle reactions in the biosynthesis of the cell wall peptidoglycan: transfers peptidoglycan precursor phospho-MurNAc-pentapeptide from UDP-MurNAc-pentapeptide onto the lipid carrier undecaprenyl phosphate, yielding undecaprenyl-pyrophosphoryl-MurNAc-pentapeptide, known as lipid I. The protein is Phospho-N-acetylmuramoyl-pentapeptide-transferase of Beutenbergia cavernae (strain ATCC BAA-8 / DSM 12333 / CCUG 43141 / JCM 11478 / NBRC 16432 / NCIMB 13614 / HKI 0122).